A 583-amino-acid chain; its full sequence is 2-succinyl-5-enolpyruvyl-6-hydroxy-3-cyclohexene-1-carboxylate synthase (583 aa).

This sequence belongs to the TPP enzyme family. MenD subfamily. In terms of assembly, homodimer. Mg(2+) is required as a cofactor. Mn(2+) serves as cofactor. Requires thiamine diphosphate as cofactor.

The catalysed reaction is isochorismate + 2-oxoglutarate + H(+) = 5-enolpyruvoyl-6-hydroxy-2-succinyl-cyclohex-3-ene-1-carboxylate + CO2. The protein operates within quinol/quinone metabolism; 1,4-dihydroxy-2-naphthoate biosynthesis; 1,4-dihydroxy-2-naphthoate from chorismate: step 2/7. It functions in the pathway quinol/quinone metabolism; menaquinone biosynthesis. In terms of biological role, catalyzes the thiamine diphosphate-dependent decarboxylation of 2-oxoglutarate and the subsequent addition of the resulting succinic semialdehyde-thiamine pyrophosphate anion to isochorismate to yield 2-succinyl-5-enolpyruvyl-6-hydroxy-3-cyclohexene-1-carboxylate (SEPHCHC). The protein is 2-succinyl-5-enolpyruvyl-6-hydroxy-3-cyclohexene-1-carboxylate synthase of Chlorobium limicola (strain DSM 245 / NBRC 103803 / 6330).